Reading from the N-terminus, the 1016-residue chain is Primary septum glucan endo-1,3-beta-D-glucosidase (1016 aa).

The first 20 residues, 1-20, serve as a signal peptide directing secretion; the sequence is MSSYLRSFIFGLLTISLAQC. Asn-37 carries an N-linked (GlcNAc...) asparagine glycan. The tract at residues 45 to 272 is beta-sandwich subdomain; that stretch reads TNVFDSVVDT…NGYIQIAKIP (228 aa). The GH81 domain maps to 45–741; it reads TNVFDSVVDT…AYAAGLWAND (697 aa). Residues 273 to 364 are alpha/beta subdomain; sequence LGDGTAEALY…AGNSITFAEA (92 aa). A (alpha/beta)6 barrel subdomain region spans residues 379 to 741; it reads GQIGYSEEAL…AYAAGLWAND (363 aa). Asp-492 is an active-site residue. His-496, Asp-567, Glu-569, Glu-573, and Tyr-650 together coordinate (1,3-beta-D-glucosyl)n. Active-site residues include Glu-569 and Glu-573. The segment at 748–1016 is required for catalytic activity against insoluble beta-glucan and to restrict localization of the enzyme to the cell septum; it reads SSSSTTTTST…GCSNGALVAA (269 aa). Residues 844 to 872 are disordered; the sequence is SSTTSSITPTPTTTSSITPTPTTTSTTTT.

It belongs to the glycosyl hydrolase 81 family.

The protein localises to the cell septum. The catalysed reaction is Hydrolysis of (1-&gt;3)-beta-D-glucosidic linkages in (1-&gt;3)-beta-D-glucans.. Cleaves internal linkages in 1,3-beta-glucan. Has a role in cell separation where it is required for the degradation of the primary septum after completion of cytokinesis. The protein is Primary septum glucan endo-1,3-beta-D-glucosidase of Schizosaccharomyces pombe (strain 972 / ATCC 24843) (Fission yeast).